The following is a 551-amino-acid chain: Arginine--tRNA ligase (551 aa).

Residues 124-134 (ANPTGPLHIGH) carry the 'HIGH' region motif.

This sequence belongs to the class-I aminoacyl-tRNA synthetase family. Monomer.

The protein resides in the cytoplasm. The enzyme catalyses tRNA(Arg) + L-arginine + ATP = L-arginyl-tRNA(Arg) + AMP + diphosphate. In Solidesulfovibrio magneticus (strain ATCC 700980 / DSM 13731 / RS-1) (Desulfovibrio magneticus), this protein is Arginine--tRNA ligase.